The sequence spans 60 residues: Large ribosomal subunit protein bL32 (60 aa).

Residues 1-21 (MAVPARHTSKAKKNKRRTHYK) are disordered. Residues 7-20 (HTSKAKKNKRRTHY) show a composition bias toward basic residues.

It belongs to the bacterial ribosomal protein bL32 family.

This chain is Large ribosomal subunit protein bL32, found in Streptococcus uberis (strain ATCC BAA-854 / 0140J).